An 87-amino-acid chain; its full sequence is U3-theraphotoxin-Hhn1p (87 aa).

The first 24 residues, 1–24 (MVNMKASMFLTFAGLVLLFVVCYA), serve as a signal peptide directing secretion. A propeptide spanning residues 25–52 (SESEEKEFPKEMLSSIFAVDNDFKQEER) is cleaved from the precursor. Intrachain disulfides connect Cys54–Cys67, Cys61–Cys72, and Cys66–Cys79.

Belongs to the neurotoxin 10 (Hwtx-1) family. 51 (Hntx-8) subfamily. Hntx-8 sub-subfamily. Expressed by the venom gland.

The protein resides in the secreted. In terms of biological role, ion channel inhibitor. In Cyriopagopus hainanus (Chinese bird spider), this protein is U3-theraphotoxin-Hhn1p.